Here is a 504-residue protein sequence, read N- to C-terminus: Sodium-coupled neutral amino acid symporter 2 (504 aa).

The segment at 1–23 is disordered; sequence MKKTEMGRFNISPDEDSSSYSSN. Topologically, residues 1 to 76 are cytoplasmic; it reads MKKTEMGRFN…HPGTTSFGMS (76 aa). The segment at 1–96 is regulates protein turnover upon amino acid deprivation; sequence MKKTEMGRFN…SGILGLSYAM (96 aa). Phosphoserine occurs at positions 12, 21, 22, and 55. Residues 77–96 traverse the membrane as a helical segment; that stretch reads VFNLSNAIVGSGILGLSYAM. Na(+) is bound at residue N82. At 97 to 102 the chain is on the extracellular side; the sequence is ANTGIA. A helical transmembrane segment spans residues 103–123; the sequence is LFIILLTFVSIFSLYSVHLLL. At 124-158 the chain is on the cytoplasmic side; that stretch reads KTANEGGSLLYEQLGHKAYGLAGKLAASGSITMQN. The helical transmembrane segment at 159 to 177 threads the bilayer; that stretch reads IGAMSSYLFIVKYELPLVI. Topologically, residues 178–188 are extracellular; that stretch reads KALMNIEDTNG. A helical transmembrane segment spans residues 189–209; it reads LWYLNGDYLVLLVSLVLILPL. At 210-217 the chain is on the cytoplasmic side; the sequence is SLLRNLGY. The helical transmembrane segment at 218-238 threads the bilayer; it reads LGYTSGLSLLCMIFFLIVVIC. The Extracellular segment spans residues 239-289; that stretch reads KKFQIPCPVEAALVANETVNGTFTQAALALAFNSTADDACRPRYFIFNSQT. The cysteines at positions 245 and 278 are disulfide-linked. N254 and N258 each carry an N-linked (GlcNAc...) asparagine glycan. Residues 290–310 form a helical membrane-spanning segment; the sequence is VYAVPILTFSFVCHPAVLPIY. The Cytoplasmic portion of the chain corresponds to 311-326; it reads EELKSRSRRRMMNVSK. Residues 327-347 form a helical membrane-spanning segment; it reads ISFFAMFLMYLLAALFGYLTF. The Extracellular portion of the chain corresponds to 348–368; that stretch reads YGHVESELLHTYSEIVGTDIL. Residues 369-389 form a helical membrane-spanning segment; it reads LLVVRLAVLVAVTLTVPVVIF. A Na(+)-binding site is contributed by T383. Residues 390–410 are Cytoplasmic-facing; it reads PIRSSVTHLLCPTKEFSWLRH. A helical transmembrane segment spans residues 411-431; the sequence is SIITVTILSFTNLLVIFVPTI. The Extracellular portion of the chain corresponds to 432–433; sequence RD. Residues 434–454 traverse the membrane as a helical segment; the sequence is IFGFIGASAAAMLIFILPSAF. Over 455-469 the chain is Cytoplasmic; sequence YIKLVKKEPMRSVQK. A helical membrane pass occupies residues 470–492; it reads IGALCFLLSGIVVMIGSMGLIVL. The Extracellular portion of the chain corresponds to 493 to 504; it reads DWVHDASAAGGH.

The protein belongs to the amino acid/polyamine transporter 2 family. Polyubiquitination by NEDD4L regulates the degradation and the activity of SLC38A2. In terms of tissue distribution, expressed in cerebral and cerebellar astrocytes and neurons.

The protein localises to the cell membrane. It carries out the reaction L-alanine(in) + Na(+)(in) = L-alanine(out) + Na(+)(out). The enzyme catalyses glycine(in) + Na(+)(in) = glycine(out) + Na(+)(out). It catalyses the reaction L-serine(in) + Na(+)(in) = L-serine(out) + Na(+)(out). The catalysed reaction is L-proline(in) + Na(+)(in) = L-proline(out) + Na(+)(out). It carries out the reaction L-methionine(in) + Na(+)(in) = L-methionine(out) + Na(+)(out). The enzyme catalyses L-histidine(in) + Na(+)(in) = L-histidine(out) + Na(+)(out). It catalyses the reaction L-asparagine(in) + Na(+)(in) = L-asparagine(out) + Na(+)(out). The catalysed reaction is L-glutamine(in) + Na(+)(in) = L-glutamine(out) + Na(+)(out). It carries out the reaction L-threonine(in) + Na(+)(in) = L-threonine(out) + Na(+)(out). The enzyme catalyses L-leucine(in) + Na(+)(in) = L-leucine(out) + Na(+)(out). It catalyses the reaction L-phenylalanine(in) + Na(+)(in) = L-phenylalanine(out) + Na(+)(out). Its activity is regulated as follows. Inhibited by N-methyl-D-glucamine. Inhibited by choline. Allosteric regulation of sodium ions binding by pH. Functionally, symporter that cotransports neutral amino acids and sodium ions from the extracellular to the intracellular side of the cell membrane. The transport is pH-sensitive, Li(+)-intolerant, electrogenic, driven by the Na(+) electrochemical gradient and cotransports of neutral amino acids and sodium ions with a stoichiometry of 1:1. May function in the transport of amino acids at the blood-brain barrier. May function in the transport of amino acids in the supply of maternal nutrients to the fetus through the placenta. Maintains a key metabolic glutamine/glutamate balance underpinning retrograde signaling by dendritic release of the neurotransmitter glutamate. Transports L-proline in differentiating osteoblasts for the efficient synthesis of proline-enriched proteins and provides proline essential for osteoblast differentiation and bone formation during bone development. The protein is Sodium-coupled neutral amino acid symporter 2 of Mus musculus (Mouse).